We begin with the raw amino-acid sequence, 473 residues long: Ribulose bisphosphate carboxylase large chain (473 aa).

Positions 116 and 166 each coordinate substrate. Lys-168 acts as the Proton acceptor in catalysis. A substrate-binding site is contributed by Lys-170. Lys-194, Asp-196, and Glu-197 together coordinate Mg(2+). The residue at position 194 (Lys-194) is an N6-carboxylysine. His-287 functions as the Proton acceptor in the catalytic mechanism. Residues Arg-288, His-320, and Ser-372 each coordinate substrate.

Belongs to the RuBisCO large chain family. Type I subfamily. In terms of assembly, heterohexadecamer of 8 large chains and 8 small chains. In R.sphaeroides the complex is approximately 500 kDa. Mg(2+) is required as a cofactor.

It carries out the reaction 2 (2R)-3-phosphoglycerate + 2 H(+) = D-ribulose 1,5-bisphosphate + CO2 + H2O. It catalyses the reaction D-ribulose 1,5-bisphosphate + O2 = 2-phosphoglycolate + (2R)-3-phosphoglycerate + 2 H(+). RuBisCO catalyzes two reactions: the carboxylation of D-ribulose 1,5-bisphosphate, the primary event in carbon dioxide fixation, as well as the oxidative fragmentation of the pentose substrate. Both reactions occur simultaneously and in competition at the same active site. The sequence is that of Ribulose bisphosphate carboxylase large chain from Thiobacillus denitrificans (strain ATCC 25259 / T1).